A 107-amino-acid polypeptide reads, in one-letter code: MDLNNRLTEDETLEQAYDIFLELAGDNLDPADILLFNLQFEERGGAELFDPAEDWQEHVDFDINPDFFAEVVIGLADSDGEEINDIFARVLLCREKDHKLCHILWKE.

Belongs to the putative dsDNA mimic protein family.

May act as a double-stranded DNA (dsDNA) mimic. Probably regulates the activity of a dsDNA-binding protein. The protein is Putative double-stranded DNA mimic protein YpsIP31758_1954 of Yersinia pseudotuberculosis serotype O:1b (strain IP 31758).